The sequence spans 440 residues: Proline--tRNA ligase (440 aa).

It belongs to the class-II aminoacyl-tRNA synthetase family. ProS type 2 subfamily. In terms of assembly, homodimer.

It is found in the cytoplasm. It carries out the reaction tRNA(Pro) + L-proline + ATP = L-prolyl-tRNA(Pro) + AMP + diphosphate. Its function is as follows. Catalyzes the attachment of proline to tRNA(Pro) in a two-step reaction: proline is first activated by ATP to form Pro-AMP and then transferred to the acceptor end of tRNA(Pro). This chain is Proline--tRNA ligase, found in Rhizobium johnstonii (strain DSM 114642 / LMG 32736 / 3841) (Rhizobium leguminosarum bv. viciae).